The primary structure comprises 159 residues: Phosphopantetheine adenylyltransferase (159 aa).

Residue T10 coordinates substrate. ATP contacts are provided by residues 10–11 (TF) and H18. Substrate is bound by residues K42, M74, and R88. ATP-binding positions include 89–91 (GLR), E99, and 124–130 (WSFISSS).

This sequence belongs to the bacterial CoaD family. As to quaternary structure, homohexamer. The cofactor is Mg(2+).

Its subcellular location is the cytoplasm. It carries out the reaction (R)-4'-phosphopantetheine + ATP + H(+) = 3'-dephospho-CoA + diphosphate. It functions in the pathway cofactor biosynthesis; coenzyme A biosynthesis; CoA from (R)-pantothenate: step 4/5. In terms of biological role, reversibly transfers an adenylyl group from ATP to 4'-phosphopantetheine, yielding dephospho-CoA (dPCoA) and pyrophosphate. The chain is Phosphopantetheine adenylyltransferase from Salmonella dublin (strain CT_02021853).